We begin with the raw amino-acid sequence, 311 residues long: Mitochondrial FAD carrier protein FLX1 (311 aa).

Solcar repeat units lie at residues 7–101 (TPLQ…TKEL), 123–210 (MNSL…LKQR), and 224–310 (LTNL…LKHR). Transmembrane regions (helical) follow at residues 13-33 (VISGLSAGSVTTLVVHPLDLL), 77-97 (LSINLFGNAIAWGVYFGLYGV), 129-149 (LSAGASSGLMTAILTNPIWVI), 183-203 (LWKGLVPALFGVSQGALYFAV), 230-250 (IEITSLGKMVSVTLVYPFQLL), and 266-286 (LFPLIKLIIANDGFVGLYKGL).

Belongs to the mitochondrial carrier (TC 2.A.29) family.

It is found in the mitochondrion inner membrane. Functionally, transport of FAD from the cytosol to the mitochondrial matrix. In Saccharomyces cerevisiae (strain ATCC 204508 / S288c) (Baker's yeast), this protein is Mitochondrial FAD carrier protein FLX1 (FLX1).